The sequence spans 232 residues: Phosphatidylserine decarboxylase proenzyme (232 aa).

Catalysis depends on serine 190, which acts as the Schiff-base intermediate with substrate; via pyruvic acid. Pyruvic acid (Ser); by autocatalysis is present on serine 190.

The protein belongs to the phosphatidylserine decarboxylase family. PSD-A subfamily. As to quaternary structure, heterodimer of a large membrane-associated beta subunit and a small pyruvoyl-containing alpha subunit. It depends on pyruvate as a cofactor. Is synthesized initially as an inactive proenzyme. Formation of the active enzyme involves a self-maturation process in which the active site pyruvoyl group is generated from an internal serine residue via an autocatalytic post-translational modification. Two non-identical subunits are generated from the proenzyme in this reaction, and the pyruvate is formed at the N-terminus of the alpha chain, which is derived from the carboxyl end of the proenzyme. The post-translation cleavage follows an unusual pathway, termed non-hydrolytic serinolysis, in which the side chain hydroxyl group of the serine supplies its oxygen atom to form the C-terminus of the beta chain, while the remainder of the serine residue undergoes an oxidative deamination to produce ammonia and the pyruvoyl prosthetic group on the alpha chain.

Its subcellular location is the cell membrane. The enzyme catalyses a 1,2-diacyl-sn-glycero-3-phospho-L-serine + H(+) = a 1,2-diacyl-sn-glycero-3-phosphoethanolamine + CO2. Its pathway is phospholipid metabolism; phosphatidylethanolamine biosynthesis; phosphatidylethanolamine from CDP-diacylglycerol: step 2/2. Functionally, catalyzes the formation of phosphatidylethanolamine (PtdEtn) from phosphatidylserine (PtdSer). The protein is Phosphatidylserine decarboxylase proenzyme of Sinorhizobium medicae (strain WSM419) (Ensifer medicae).